Consider the following 368-residue polypeptide: Proline-rich protein 5-like (368 aa).

The residue at position 28 (S28) is a Phosphoserine. Residues L312 to S368 are disordered. A compositionally biased stretch (polar residues) spans A353–S368.

Belongs to the PROTOR family. As to quaternary structure, interacts with the mammalian target of rapamycin complex 2 (mTORC2) which contains MTOR, MLST8, PRR5, RICTOR, MAPKAP1 and DEPTOR. Interacts with RFFL. Interacts (via C-terminus) with ZFP36 (via C-terminus); this interaction may accelerate ZFP36-mediated mRNA decay during stress. Interacts with RICTOR. Post-translationally, ubiquitinated. Ubiquitination by RFFL promotes proteasomal degradation of PRR5L thereby modifying the substrate-specific activity of the mTORC2 complex. Ubiquitination by RFFL is stimulated by LPA/lysophosphatidic acid.

In terms of biological role, associates with the mTORC2 complex that regulates cellular processes including survival and organization of the cytoskeleton. Regulates the activity of the mTORC2 complex in a substrate-specific manner preventing for instance the specific phosphorylation of PKCs and thereby controlling cell migration. Plays a role in the stimulation of ZFP36-mediated mRNA decay of several ZFP36-associated mRNAs, such as TNF-alpha and GM-CSF, in response to stress. Required for ZFP36 localization to cytoplasmic stress granule (SG) and P-body (PB) in response to stress. The polypeptide is Proline-rich protein 5-like (PRR5L) (Bos taurus (Bovine)).